Consider the following 120-residue polypeptide: Ribonuclease P protein component (120 aa).

Belongs to the RnpA family. As to quaternary structure, consists of a catalytic RNA component (M1 or rnpB) and a protein subunit.

The enzyme catalyses Endonucleolytic cleavage of RNA, removing 5'-extranucleotides from tRNA precursor.. Its function is as follows. RNaseP catalyzes the removal of the 5'-leader sequence from pre-tRNA to produce the mature 5'-terminus. It can also cleave other RNA substrates such as 4.5S RNA. The protein component plays an auxiliary but essential role in vivo by binding to the 5'-leader sequence and broadening the substrate specificity of the ribozyme. This Bordetella avium (strain 197N) protein is Ribonuclease P protein component.